Reading from the N-terminus, the 446-residue chain is COBRA-like protein 1 (446 aa).

An N-terminal signal peptide occupies residues 1-28 (MALLLLRMGVSVALLVAFFSSLIPSSEA). N-linked (GlcNAc...) asparagine glycans are attached at residues Asn37, Asn162, Asn170, Asn209, Asn234, Asn316, Asn331, Asn350, and Asn419. Residue Ala420 is the site of GPI-anchor amidated alanine attachment. A propeptide spans 421-446 (STRVMSSILLPFITIWTALTFLMVYA) (removed in mature form).

It belongs to the COBRA family.

The protein resides in the cell membrane. Functionally, involved in determining the orientation of cell expansion, probably by playing an important role in cellulose deposition. May act by recruiting cellulose synthesizing complexes to discrete positions on the cell surface. This Oryza sativa subsp. japonica (Rice) protein is COBRA-like protein 1 (BC1L6).